A 145-amino-acid polypeptide reads, in one-letter code: Superoxide dismutase [Mn/Fe] (145 aa).

Residues His10 and His64 each contribute to the Fe(3+) site. Mn(2+) contacts are provided by His10 and His64.

This sequence belongs to the iron/manganese superoxide dismutase family. Mn(2+) is required as a cofactor. The cofactor is Fe(3+).

It catalyses the reaction 2 superoxide + 2 H(+) = H2O2 + O2. Its function is as follows. Destroys superoxide anion radicals which are normally produced within the cells and which are toxic to biological systems. Catalyzes the dismutation of superoxide anion radicals into O2 and H2O2 by successive reduction and oxidation of the transition metal ion at the active site. The chain is Superoxide dismutase [Mn/Fe] (sodA) from Streptococcus alactolyticus.